The primary structure comprises 159 residues: Cyclic pyranopterin monophosphate synthase (159 aa).

Substrate-binding positions include 75-77 (LCH) and 113-114 (ME). D128 is a catalytic residue.

It belongs to the MoaC family. Homohexamer; trimer of dimers.

It catalyses the reaction (8S)-3',8-cyclo-7,8-dihydroguanosine 5'-triphosphate = cyclic pyranopterin phosphate + diphosphate. It participates in cofactor biosynthesis; molybdopterin biosynthesis. Its function is as follows. Catalyzes the conversion of (8S)-3',8-cyclo-7,8-dihydroguanosine 5'-triphosphate to cyclic pyranopterin monophosphate (cPMP). The chain is Cyclic pyranopterin monophosphate synthase from Yersinia pseudotuberculosis serotype IB (strain PB1/+).